We begin with the raw amino-acid sequence, 87 residues long: NADH dehydrogenase [ubiquinone] 1 alpha subcomplex subunit 4-like 2 (87 aa).

It belongs to the complex I NDUFA4 subunit family.

This chain is NADH dehydrogenase [ubiquinone] 1 alpha subcomplex subunit 4-like 2 (Ndufa4l2), found in Mus musculus (Mouse).